The primary structure comprises 429 residues: Esterase/beta-lactamase LipL (429 aa).

The active-site Acyl-ester intermediate is the Ser88.

Belongs to the beta-lactamase family.

The protein resides in the secreted. The protein localises to the cell wall. It is found in the cell membrane. It catalyses the reaction a fatty acid ester + H2O = an aliphatic alcohol + a fatty acid + H(+). It carries out the reaction an acetyl ester + H2O = an aliphatic alcohol + acetate + H(+). The enzyme catalyses a butanoate ester + H2O = an aliphatic alcohol + butanoate + H(+). The catalysed reaction is an octanoate ester + H2O = an aliphatic alcohol + octanoate + H(+). It catalyses the reaction decanoate ester + H2O = decanoate + an aliphatic alcohol + H(+). It carries out the reaction a dodecanoate ester + H2O = an aliphatic alcohol + dodecanoate + H(+). The enzyme catalyses a tetradecanoate ester + H2O = an aliphatic alcohol + tetradecanoate + H(+). The catalysed reaction is hexadecanoate ester + H2O = an aliphatic alcohol + hexadecanoate + H(+). It catalyses the reaction octadecanoate ester + H2O = an aliphatic alcohol + octadecanoate + H(+). It carries out the reaction a hexanoate ester + H2O = an aliphatic alcohol + hexanoate + H(+). The enzyme catalyses a beta-lactam + H2O = a substituted beta-amino acid. With respect to regulation, esterase and beta-lactamase activities are inhibited by the active site residue modifiers phenylmethanesulfonylflouride (PMSF) and diethylpyrocarbonate (DEPC). Shows both esterase and beta-lactamase activities, with a much higher activity against phenyl esters than against beta-lactams. Shows esterase activity against both long-chain and short-chain p-nitrophenol (pNP) esters, with a preference for shorter chain esters. Hydrolyzes substrates containing beta-lactam ring such as nitrocefin and ampicillin. Functions as an immunogen that activates both humoral and cell-mediated responses. In Mycobacterium tuberculosis (strain ATCC 25618 / H37Rv), this protein is Esterase/beta-lactamase LipL.